The sequence spans 358 residues: Trace amine-associated receptor 7e (358 aa).

The Extracellular portion of the chain corresponds to 1-47; sequence MATGDDSFLWDQDSILSRDLFSATSAELCYENLNRSCVRSPYSPGPR. N-linked (GlcNAc...) asparagine glycosylation occurs at asparagine 34. 2 disulfide bridges follow: cysteine 37/cysteine 201 and cysteine 120/cysteine 205. Residues 48 to 68 traverse the membrane as a helical segment; the sequence is LILYAVFGFGAVLAVCGNLLV. Topologically, residues 69-83 are cytoplasmic; the sequence is MTSILHFRQLHSPAN. The helical transmembrane segment at 84–104 threads the bilayer; sequence FLVASLACADFLVGLTVMPFS. The Extracellular segment spans residues 105–121; that stretch reads TVRSVEGCWYFGEIYCK. Residues 122–143 traverse the membrane as a helical segment; sequence LHTCFDVSFCSSSIFHLCFISV. Topologically, residues 144–166 are cytoplasmic; the sequence is DRYIAVSDPLIYPTRFTASVSNK. A helical transmembrane segment spans residues 167 to 187; it reads CITFSWLLSISYGFSLIYTGA. Residues 188–212 lie on the Extracellular side of the membrane; that stretch reads SEAGLEDLVSALTCVGGCQLAVNQS. Asparagine 210 carries N-linked (GlcNAc...) asparagine glycosylation. The chain crosses the membrane as a helical span at residues 213 to 233; sequence WVFINFLLFLIPTLVMITVYS. Residues 234–274 lie on the Cytoplasmic side of the membrane; sequence KIFLIAKQQAQNIEKMSKQTARASDSYKDRVAKRERKAAKT. The chain crosses the membrane as a helical span at residues 275–295; the sequence is LGIAVAAFLLSWLPYFIDSFI. At 296–309 the chain is on the extracellular side; that stretch reads DAFLGFITPTYVYE. The helical transmembrane segment at 310 to 333 threads the bilayer; that stretch reads ILVWIAYYNSAMNPLIYAFFYPWF. The Cytoplasmic portion of the chain corresponds to 334 to 358; sequence RKAIKLTVTGKILRENSSTTNLFPE.

This sequence belongs to the G-protein coupled receptor 1 family. Specifically expressed in neurons of the olfactory epithelium.

It localises to the cell membrane. In terms of biological role, olfactory receptor specific for N,N-dimethylalkylamines trace amines. Trace amine compounds are enriched in animal body fluids and act on trace amine-associated receptors (TAARs) to elicit both intraspecific and interspecific innate behaviors. Ligand-binding causes a conformation change that triggers signaling via G(s)-class of G alpha proteins (GNAL or GNAS). This chain is Trace amine-associated receptor 7e, found in Mus musculus (Mouse).